The chain runs to 125 residues: Protein ApaG (125 aa).

Residues 1-125 (MIEQPRICVQ…FRLAIPALIH (125 aa)) form the ApaG domain.

The sequence is that of Protein ApaG from Yersinia pestis bv. Antiqua (strain Antiqua).